The chain runs to 333 residues: S-adenosylmethionine-dependent nucleotide dehydratase (333 aa).

Residues 1-239 form the Radical SAM core domain; sequence MNIKTIVINW…SAPQKQNNVI (239 aa). Cys-16, Cys-20, and Cys-23 together coordinate [4Fe-4S] cluster.

Belongs to the radical SAM superfamily. Viperin family. [4Fe-4S] cluster serves as cofactor.

It catalyses the reaction GTP + AH2 + S-adenosyl-L-methionine = 3'-deoxy-3',4'-didehydro-GTP + 5'-deoxyadenosine + L-methionine + A + H2O + H(+). Functionally, expression of pVip56 in E.coli (strain MG1655) confers resistance to phage P1; has no effect against T7. Catalyzes the conversion of guanosine triphosphate (GTP) to 3'-deoxy-3',4'-didehydro-GTP (ddhGTP), probably via a SAM-dependent radical mechanism. The modified nucleotide represses transcription from T7 RNA polymerase-directed genes (possibly by acting as chain terminators), strongly suggesting these nucleotides block viral polymerase transcription. How this protein allows bacteria to resist viruses that do not encode their own RNA polymerase (such as lambda, P1) is unknown. The chain is S-adenosylmethionine-dependent nucleotide dehydratase from Fibrobacter sp. (strain UWH6).